The sequence spans 3147 residues: Probable polyketide synthase 1 (3147 aa).

The Ketosynthase family 3 (KS3) domain maps to 12–457 (SSDVAVIGVG…GSNCHLIIQE (446 aa)). Active-site for beta-ketoacyl synthase activity residues include cysteine 180 and histidine 319. The segment at 345 to 369 (QLNNFSTDGNDNDDDDDDNTSPEPL) is disordered. Positions 354–364 (NDNDDDDDDNT) are enriched in acidic residues. The active-site For beta-ketoacyl synthase activity is the histidine 380. Residues 672 to 705 (GIYPSISVGHSFGEVSSYYLSGIISLETACKIVY) form an acyl/malonyl transferase region. Serine 682 functions as the For acyl/malonyl transferase activity in the catalytic mechanism. The N-terminal hotdog fold stretch occupies residues 976–1127 (NRLEGPTTSL…ATISLEQQQP (152 aa)). Residues 976–1298 (NRLEGPTTSL…IKSTNPKSTK (323 aa)) enclose the PKS/mFAS DH domain. Histidine 1014 serves as the catalytic Proton acceptor; for dehydratase activity. The C-terminal hotdog fold stretch occupies residues 1149–1298 (DISKLDKFEL…IKSTNPKSTK (150 aa)). The active-site Proton donor; for dehydratase activity is the aspartate 1209. Residues 2568–2645 (SSNISLQDKI…SFLEKVNGLS (78 aa)) enclose the Carrier domain. Residue serine 2605 is modified to O-(pantetheine 4'-phosphoryl)serine. Positions 2723 to 2747 (PSLSQSDVLKTPPIKSLNNTKNSSL) are disordered. Residues 2738-2747 (SLNNTKNSSL) are compositionally biased toward polar residues. The tract at residues 2789 to 3147 (VLGIGISVPG…FEGCFLKNVV (359 aa)) is chalcone synthase. Residue cysteine 2930 is part of the active site.

This sequence in the C-terminal section; belongs to the thiolase-like superfamily. Chalcone/stilbene synthases family. In terms of assembly, homodimer. The cofactor is pantetheine 4'-phosphate.

The enzyme catalyses (E)-4-coumaroyl-CoA + 3 malonyl-CoA + 3 H(+) = 2',4,4',6'-tetrahydroxychalcone + 3 CO2 + 4 CoA. It participates in secondary metabolite biosynthesis; flavonoid biosynthesis. In terms of biological role, probable polyketide synthase. Produces only acylpyrones; in vitro. This is Probable polyketide synthase 1 (stlA) from Dictyostelium discoideum (Social amoeba).